A 116-amino-acid polypeptide reads, in one-letter code: Ribosome-binding factor A (116 aa).

It belongs to the RbfA family. Monomer. Binds 30S ribosomal subunits, but not 50S ribosomal subunits or 70S ribosomes.

It localises to the cytoplasm. Its function is as follows. One of several proteins that assist in the late maturation steps of the functional core of the 30S ribosomal subunit. Associates with free 30S ribosomal subunits (but not with 30S subunits that are part of 70S ribosomes or polysomes). Required for efficient processing of 16S rRNA. May interact with the 5'-terminal helix region of 16S rRNA. The polypeptide is Ribosome-binding factor A (Chlorobium phaeobacteroides (strain DSM 266 / SMG 266 / 2430)).